The chain runs to 429 residues: Inositol-3-phosphate synthase 1 (429 aa).

A helical membrane pass occupies residues 12-32 (LGVLVVGVGGAVATTMIVGTL). Positions 22, 23, 79, 116, 165, 167, 201, 244, 276, 277, and 290 each coordinate NAD(+).

The protein belongs to the myo-inositol 1-phosphate synthase family. Homotetramer. It depends on NAD(+) as a cofactor.

Its subcellular location is the membrane. The enzyme catalyses D-glucose 6-phosphate = 1D-myo-inositol 3-phosphate. Its pathway is polyol metabolism; myo-inositol biosynthesis; myo-inositol from D-glucose 6-phosphate: step 1/2. Its function is as follows. Key enzyme in myo-inositol biosynthesis pathway that catalyzes the conversion of glucose 6-phosphate to 1D-myo-inositol 3-phosphate in a NAD-dependent manner. This chain is Inositol-3-phosphate synthase 1, found in Bacteroides thetaiotaomicron (strain ATCC 29148 / DSM 2079 / JCM 5827 / CCUG 10774 / NCTC 10582 / VPI-5482 / E50).